We begin with the raw amino-acid sequence, 664 residues long: MSSRKHLANAIRALSMDGVQQANSGHPGAPMGMADIAEVLWRSHLNHNPANPEWADRDRFVLSNGHGSMLIYSLLHLSGYELSIDDLKNFRQLHSKTPGHPEYGYAPGIETTTGPLGQGITNAVGMALAEKALAAQFNKEGHDIIDHFTYVFMGDGCLMEGISHEACSLAGTLGLGKLIAFWDDNGISIDGHVEGWFSDDTPKRFEAYGWHVIPAVDGHDSDAINAAIEAAKADPRPTLICTKTIIGFGSPNKSGSHDCHGAPLGAEEIAAAREFLGWEHPAFEIPADVYAEWDAKAAGAEKEAAWNAKFEAYAAAYPTEAAELKRRLNGELPAEWEEKANQIIADLQANPANIASRKASQNALEAFGQMLPEFMGGSADLAPSNLTMWSGSKSLEANDFSGNYIHYGVREFGMTAIMNGIALHGGFVPYGATFLMFMEYARNAMRMAALMKIQNIQVYTHDSIGLGEDGPTHQPVEQMASLRLTPNMNTWRPCDQVESAVAWKLAIERKDAPTALIFSRQNLAQQERTAEQVTDIAKGGYILKDSDGKPELILIATGSEVELAVKAAEQLTAEGKKVRVVSMPSTDAFDKQDAAYREAVLPSDVTARIAIEAGIADFWYKYVGFDGRIIGMTTFGESAPADQLFEMFGFTVENVVNTAKELLA.

His26 is a binding site for substrate. Residues His66 and Gly114–Leu116 each bind thiamine diphosphate. Asp155 contacts Mg(2+). Thiamine diphosphate contacts are provided by Gly156 and Asn185. Mg(2+) contacts are provided by Asn185 and Ile187. Positions 260, 357, and 384 each coordinate substrate. Residue His260 participates in thiamine diphosphate binding. The active-site Proton donor is Glu411. Thiamine diphosphate is bound at residue Phe437. Substrate-binding residues include His461, Asp469, and Arg520.

Belongs to the transketolase family. In terms of assembly, homodimer. Requires Mg(2+) as cofactor. Ca(2+) is required as a cofactor. Mn(2+) serves as cofactor. The cofactor is Co(2+). It depends on thiamine diphosphate as a cofactor.

It catalyses the reaction D-sedoheptulose 7-phosphate + D-glyceraldehyde 3-phosphate = aldehydo-D-ribose 5-phosphate + D-xylulose 5-phosphate. Catalyzes the transfer of a two-carbon ketol group from a ketose donor to an aldose acceptor, via a covalent intermediate with the cofactor thiamine pyrophosphate. This is Transketolase 1 (tkt1) from Vibrio parahaemolyticus serotype O3:K6 (strain RIMD 2210633).